The following is a 1342-amino-acid chain: DNA-directed RNA polymerase subunit beta (1342 aa).

This sequence belongs to the RNA polymerase beta chain family. As to quaternary structure, the RNAP catalytic core consists of 2 alpha, 1 beta, 1 beta' and 1 omega subunit. When a sigma factor is associated with the core the holoenzyme is formed, which can initiate transcription.

It carries out the reaction RNA(n) + a ribonucleoside 5'-triphosphate = RNA(n+1) + diphosphate. Its function is as follows. DNA-dependent RNA polymerase catalyzes the transcription of DNA into RNA using the four ribonucleoside triphosphates as substrates. In Citrobacter koseri (strain ATCC BAA-895 / CDC 4225-83 / SGSC4696), this protein is DNA-directed RNA polymerase subunit beta.